The sequence spans 517 residues: Serine hydroxymethyltransferase 2, mitochondrial (517 aa).

Residues 1–29 (MALALRRLSSSVKKPISLLSSNGGSLRFM) constitute a mitochondrion transit peptide. An L-serine-binding site is contributed by Ser-82. Pemetrexed is bound by residues Ser-82, Tyr-102, Glu-104, Tyr-112, 148 to 150 (SGS), and His-177. L-serine is bound by residues Glu-104 and Tyr-112. Glu-104 provides a ligand contact to methotrexate. 184-186 (TDT) contributes to the methotrexate binding site. Pemetrexed is bound by residues Ser-232 and His-260. L-serine is bound by residues His-260 and Lys-286. Lys-286 carries the N6-(pyridoxal phosphate)lysine modification. Gly-331 is a pemetrexed binding site. Lys-414 provides a ligand contact to methotrexate. Arg-430 is an L-serine binding site. A pemetrexed-binding site is contributed by Arg-430.

Belongs to the SHMT family. Homotetramer. It depends on pyridoxal 5'-phosphate as a cofactor. In terms of tissue distribution, ubiquitous. Mainly expressed in the shoot apical meristem and roots. Also detected in the leaf vasculature, especially in the protoxylem and adjacent cell layers.

It localises to the mitochondrion. It catalyses the reaction (6R)-5,10-methylene-5,6,7,8-tetrahydrofolate + glycine + H2O = (6S)-5,6,7,8-tetrahydrofolate + L-serine. It participates in one-carbon metabolism; tetrahydrofolate interconversion. With respect to regulation, inhibited by the antifolate drugs methotrexate and pemetrexed. Functions outside the photorespiratory pathway in catalyzing the interconversion of serine and glycine with the conversion of tetrahydrofolate (THF) into 5,10-methylene-THF. In Arabidopsis thaliana (Mouse-ear cress), this protein is Serine hydroxymethyltransferase 2, mitochondrial.